A 319-amino-acid chain; its full sequence is MGFDEKREPTGGRLRLQDIPALTQDHCRMRDPAEVERIINEFVIGGPERMQIVSDFDYTITKQRTEDGGAVPSSFGIFNACQSLPENFKAETDKLYHKYRPIEIDPHMPIAEKVQYMIEWWTKSGELTSGFPFDQSEIDQIASKYTHALRDRTHEFFADLQRLGIPTLVFSAGLGNSVVSVLRQANVLHPNVKVVSNFLQFRDGLLDGFQQPMIHTFNKNETVLNETSEYYDLVHTRDHIIVMGDSIGDADMASGVPASSHIMKIGFLFDHVEANMKKYMDTFDIVLVDDQTMDVPRTLLSLIEKQHKLNLEAPKQSSL.

The Nucleophile role is filled by Asp55. Positions 55 and 57 each coordinate Mg(2+). Asp57 functions as the Proton donor in the catalytic mechanism. Glu103 is a binding site for CMP. N(7)-methyl-GMP contacts are provided by Glu103 and Ser124. 171–172 (SA) contributes to the substrate binding site. Asp245 serves as a coordination point for Mg(2+).

Belongs to the pyrimidine 5'-nucleotidase family. As to quaternary structure, monomer. Requires Mg(2+) as cofactor.

It catalyses the reaction N(7)-methyl-GMP + H2O = N(7)-methylguanosine + phosphate. The enzyme catalyses CMP + H2O = cytidine + phosphate. The catalysed reaction is a ribonucleoside 5'-phosphate + H2O = a ribonucleoside + phosphate. Its activity is regulated as follows. Inhibited by high levels of AMP. In terms of biological role, specifically hydrolyzes 7-methylguanosine monophosphate (m(7)GMP) to 7-methylguanosine and inorganic phosphate. Also able to mediate hydrolysis of diphosphate (m(7)GDP) to 7-methylguanosine and 2 inorganic phosphate with lower activity. The specific activity for m(7)GMP may protect cells against undesired salvage of m(7)GMP and its incorporation into nucleic acids. Also has weak activity for CMP. UMP and purine nucleotides are poor substrates. In Drosophila melanogaster (Fruit fly), this protein is 7-methylguanosine phosphate-specific 5'-nucleotidase.